The sequence spans 1402 residues: Eukaryotic translation initiation factor 4 gamma 1 (1402 aa).

2 disordered regions span residues 1–123 (MSGA…SPEP) and 165–402 (HEPN…YEYK). Phosphothreonine is present on residues Thr-11 and Thr-27. Residues 53 to 64 (GPEHSPSESQPS) are compositionally biased toward low complexity. A compositionally biased stretch (pro residues) spans 65-76 (SPSPTPSPPPIL). Ser-120 bears the Phosphoserine mark. Positions 238 to 251 (ASATPPAVPSATPA) are enriched in low complexity. Positions 261 to 275 (QEEEGEEEEEEEEGE) are enriched in acidic residues. Basic and acidic residues-rich tracts occupy residues 280-290 (ESDKGGEDLHP) and 324-340 (KELN…DAFK). The span at 359-370 (PTPESEGSSGPS) shows a compositional bias: low complexity. The segment covering 379–388 (WDAKEDKIHN) has biased composition (basic and acidic residues). At Thr-452 the chain carries Phosphothreonine. 4 disordered regions span residues 476–517 (ANLG…PPKG), 536–563 (AEKA…GSKT), 600–636 (SKGS…ATTE), and 828–1028 (MAKG…KREA). Positions 479-488 (GRPALSSRGP) are enriched in low complexity. Arg-490 and Arg-499 each carry omega-N-methylarginine. Over residues 547–563 (TAADKDRGEEDADGSKT) the composition is skewed to basic and acidic residues. Positions 567 to 793 (FRRVRSILNK…QDVLDLRQSN (227 aa)) constitute an MIF4G domain. Polar residues predominate over residues 602-621 (GSLTSSLRRPFQNPTSQWPS). Phosphoserine is present on Ser-832. Residues Arg-836 and Arg-846 each carry the omega-N-methylarginine modification. Phosphoserine is present on residues Ser-881 and Ser-896. The segment covering 892 to 913 (GGRLSWGKGSSGSGAKPSDAAS) has biased composition (low complexity). An N6-acetyllysine modification is found at Lys-899. Polar residues predominate over residues 918 to 937 (PATSTLNRFSALQQAVPTES). Phosphoserine is present on residues Ser-948 and Ser-950. Positions 949–981 (LSRERGGKAGEPRRRLERSERGGDRGDRLDRAR) are enriched in basic and acidic residues. Phosphoserine; by PKC/PRKCA is present on Ser-988. Basic and acidic residues predominate over residues 989–1028 (FSKEVEERSRERPSQPEGLRKAASLTEDRDRGRDAAKREA). A phosphoserine mark is found at Ser-990, Ser-997, and Ser-1012. Thr-1014 is subject to Phosphothreonine. A phosphoserine mark is found at Ser-1034 and Ser-1041. One can recognise an MI domain in the interval 1044-1166 (ELEKKSKAII…PMGELFREIT (123 aa)). The region spanning 1231 to 1401 (EESEAPGQRA…REVEEEESDH (171 aa)) is the W2 domain. Phosphoserine is present on Ser-1399.

Belongs to the eukaryotic initiation factor 4G family. As to quaternary structure, eIF4F is a multi-subunit complex, the composition of which varies with external and internal environmental conditions. It is composed of at least EIF4A, EIF4E (cap-binding) and EIF4G1/EIF4G3. Interacts with eIF3 complex, mutually exclusive with EIF4A1 or EIF4A2, EIF4E and through its N-terminus with PABPC1. Interacts with EIF4E or with EIF1 (mutually exclusive) through a common binding site. Interacts through its C-terminus with the serine/threonine kinases MKNK1, and with MKNK2. Appears to act as a scaffold protein, holding these enzymes in place to phosphorylate EIF4E. Non-phosphorylated EIF4EBP1 competes with EIF4G1/EIF4G3 to interact with EIF4E; insulin stimulated MAP-kinase (MAPK1 and MAPK3) phosphorylation of EIF4EBP1 causes dissociation of the complex allowing EIF4G1/EIF4G3 to bind and consequent initiation of translation. EIF4G1/EIF4G3 interacts with PABPC1 to bring about circularization of the mRNA. Interacts with EIF4E3. Interacts with CIRBP and MIF4GD. Interacts with RBM4. Interacts with HNRNPD/AUF1; the interaction requires RNA. Interacts with DDX3X; the interaction requires RNA. Interacts with DAZAP2. Phosphorylated at multiple sites in vivo. Phosphorylation at Ser-988 by PRKCA induces binding to MKNK1.

It localises to the cytoplasm. It is found in the nucleus. Its subcellular location is the stress granule. In terms of biological role, component of the protein complex eIF4F, which is involved in the recognition of the mRNA cap, ATP-dependent unwinding of 5'-terminal secondary structure and recruitment of mRNA to the ribosome. Exists in two complexes, either with EIF1 or with EIF4E (mutually exclusive). Together with EIF1, is required for leaky scanning, in particular for avoiding cap-proximal start codon. Together with EIF4E, antagonizes the scanning promoted by EIF1-EIF4G1 and locates the start codon (through a TISU element) without scanning. As a member of the eIF4F complex, required for endoplasmic reticulum stress-induced ATF4 mRNA translation. The polypeptide is Eukaryotic translation initiation factor 4 gamma 1 (EIF4G1) (Oryctolagus cuniculus (Rabbit)).